The following is an 89-amino-acid chain: uncharacterized protein (89 aa).

The chain crosses the membrane as a helical span at residues 67-86 (VYLSSMYICFILLAIWMTVW).

The protein resides in the membrane. This is an uncharacterized protein from Bacillus subtilis (strain 168).